Consider the following 165-residue polypeptide: Endoribonuclease YbeY (165 aa).

Residues H131, H135, and H141 each coordinate Zn(2+).

It belongs to the endoribonuclease YbeY family. Requires Zn(2+) as cofactor.

The protein resides in the cytoplasm. In terms of biological role, single strand-specific metallo-endoribonuclease involved in late-stage 70S ribosome quality control and in maturation of the 3' terminus of the 16S rRNA. This is Endoribonuclease YbeY from Lachnoclostridium phytofermentans (strain ATCC 700394 / DSM 18823 / ISDg) (Clostridium phytofermentans).